The sequence spans 566 residues: Liver carboxylesterase (566 aa).

The N-terminal stretch at 1-18 (MWLLPLVLTSLASSATWA) is a signal peptide. N-linked (GlcNAc...) asparagine glycosylation is present at Asn80. A disulfide bridge connects residues Cys88 and Cys117. Ser222 (acyl-ester intermediate) is an active-site residue. A disulfide bridge links Cys274 with Cys285. Glu354 functions as the Charge relay system in the catalytic mechanism. Ser379 is subject to Phosphoserine. Catalysis depends on His467, which acts as the Charge relay system. The Prevents secretion from ER motif lies at 563 to 566 (HAEL).

Belongs to the type-B carboxylesterase/lipase family.

The protein resides in the endoplasmic reticulum lumen. It carries out the reaction a carboxylic ester + H2O = an alcohol + a carboxylate + H(+). With respect to regulation, activated by CHAPS at concentrations of up to 130 mM, higher concentrations reduce activity. In the presence of CHAPS, activity is stimulated by non-ionic detergents. Inhibited by the esterase inhibitors diisopropylfluorophosphate and phenylmethylsulfonyl fluoride. Involved in the detoxification of xenobiotics and in the activation of ester and amide prodrugs. Active towards triacylglycerides containing short-chain fatty acids from C2 to C6, and 1(3)-monoacylglycerols containing fatty acids from C2 to C12. Inactive on long-chain triacylglycerols and diacylglycerol. Hydrolyzes aromatic and alkyl esters and vitamin A acetate. The hydrolysis rate depends upon the amino acid promoiety and the esterification site of the prodrug. Aromatic promoieties are favored, highest rates are observed with phenylalanyl progdrugs, hydrolysis of valyl and isoleucyl prodrugs is less efficient. With floxuridine prodrugs, activity is higher on 5' monoesters than on 3' monoesters. With gemcitabine prodrugs, activity is higher on 3' monoesters than on 5' monoesters. This Sus scrofa (Pig) protein is Liver carboxylesterase.